Consider the following 928-residue polypeptide: MORC family CW-type zinc finger protein 4 (928 aa).

The CW-type zinc-finger motif lies at 417–469 (RIPDQTWVQCDECLKWRRLPGMVDPSTLPARWFCYYNPHPKFKRCSVPEEQER). Zn(2+)-binding residues include C426, C429, C450, and C461. Disordered regions lie at residues 474 to 510 (LHRSKAKQQVEAAEKKQKPMESDKYQVFSNPPKTPPL), 527 to 546 (NSPSLLPSVREESRSPPRLK), 599 to 649 (AYPE…DQDQ), and 718 to 766 (RAES…LKRT). Residues 485 to 497 (AAEKKQKPMESDK) are compositionally biased toward basic and acidic residues. Composition is skewed to basic and acidic residues over residues 626-636 (ESNKHTEENRE), 739-748 (KGKDCQDSRS), and 756-766 (TPKESEELKRT). Positions 758-867 (KESEELKRTT…LEVLQKAQVS (110 aa)) form a coiled coil.

Its subcellular location is the nucleus. Functionally, histone methylation reader which binds to non-methylated (H3K4me0), monomethylated (H3K4me1), dimethylated (H3K4me2) and trimethylated (H3K4me3) 'Lys-4' on histone H3. The order of binding preference is H3K4me3 &gt; H3K4me2 &gt; H3K4me1 &gt; H3K4me0. This is MORC family CW-type zinc finger protein 4 (Morc4) from Mus musculus (Mouse).